The following is a 102-amino-acid chain: 10 kDa heat shock protein, mitochondrial (102 aa).

Ala-2 is modified (N-acetylalanine). Position 8 is an N6-acetyllysine (Lys-8). Lys-28 carries the N6-succinyllysine modification. Lys-40 is subject to N6-acetyllysine; alternate. 3 positions are modified to N6-malonyllysine; alternate: Lys-40, Lys-54, and Lys-56. N6-succinyllysine; alternate occurs at positions 40, 54, and 56. An N6-acetyllysine; alternate modification is found at Lys-56. The residue at position 57 (Ser-57) is a Phosphoserine. Residues Lys-66 and Lys-70 each carry the N6-acetyllysine; alternate modification. An N6-succinyllysine; alternate mark is found at Lys-66 and Lys-70. A Phosphothreonine modification is found at Thr-79. N6-acetyllysine; alternate occurs at positions 80 and 86. N6-succinyllysine; alternate is present on residues Lys-80 and Lys-86. Lys-99 is subject to N6-acetyllysine.

This sequence belongs to the GroES chaperonin family. Homoheptamer arranged in a ring structure. 2 heptameric Hsp10 rings interact with a Hsp60 tetradecamer in the structure of a back-to-back double heptameric ring to form the symmetrical football complex.

It localises to the mitochondrion matrix. Its function is as follows. Co-chaperonin implicated in mitochondrial protein import and macromolecular assembly. Together with Hsp60, facilitates the correct folding of imported proteins. May also prevent misfolding and promote the refolding and proper assembly of unfolded polypeptides generated under stress conditions in the mitochondrial matrix. The functional units of these chaperonins consist of heptameric rings of the large subunit Hsp60, which function as a back-to-back double ring. In a cyclic reaction, Hsp60 ring complexes bind one unfolded substrate protein per ring, followed by the binding of ATP and association with 2 heptameric rings of the co-chaperonin Hsp10. This leads to sequestration of the substrate protein in the inner cavity of Hsp60 where, for a certain period of time, it can fold undisturbed by other cell components. Synchronous hydrolysis of ATP in all Hsp60 subunits results in the dissociation of the chaperonin rings and the release of ADP and the folded substrate protein. The sequence is that of 10 kDa heat shock protein, mitochondrial (Hspe1) from Mus musculus (Mouse).